A 141-amino-acid chain; its full sequence is Cystatin (141 aa).

The N-terminal stretch at 1 to 26 (MVHSQLPVAAPLRLLCALLLLPSATM) is a signal peptide. The 101-residue stretch at 29–129 (GGISPRSVTD…CHFQVWSRPW (101 aa)) folds into the Cystatin domain. Residues 73–77 (QVVAG) carry the Secondary area of contact motif. 2 cysteine pairs are disulfide-bonded: Cys91-Cys107 and Cys120-Cys140.

It belongs to the cystatin family. Expressed by the venom gland at an extremely low level (at protein level).

It localises to the secreted. Functionally, inhibits various C1 cysteine proteases including cathepsin L, papain and cathepsin B. This protein has no toxic activity and its function in the venom is unknown. It may play a role as a housekeeping or regulatory protein. This is Cystatin from Oxyuranus microlepidotus (Inland taipan).